The primary structure comprises 1243 residues: Plasma membrane calcium-transporting ATPase 2 (1243 aa).

The segment covering 1–13 has biased composition (polar residues); sequence MGDMTNSDFYSKN. The segment at 1-24 is disordered; it reads MGDMTNSDFYSKNQRNESSHGGEF. The Cytoplasmic portion of the chain corresponds to 1 to 94; it reads MGDMTNSDFY…NFIPPKKPKT (94 aa). Serine 18 and serine 27 each carry phosphoserine. The chain crosses the membrane as a helical span at residues 95 to 115; the sequence is FLQLVWEALQDVTLIILEIAA. The Extracellular segment spans residues 116–152; that stretch reads IISLGLSFYHPPGESNEGCATAQGGAEDEGEAEAGWI. A helical transmembrane segment spans residues 153–173; sequence EGAAILLSVICVVLVTAFNDW. Residues 174 to 390 are Cytoplasmic-facing; it reads SKEKQFRGLQ…KEKSVLQGKL (217 aa). Residues 296–308 show a composition bias toward basic and acidic residues; it reads EEKKDKKGVKKGD. Residues 296-382 form a disordered region; the sequence is EEKKDKKGVK…KKKANMHKKE (87 aa). Low complexity-rich tracts occupy residues 313–330 and 337–356; these read PAAD…ANAS and QDGS…GAAA. Residues 391–410 form a helical membrane-spanning segment; the sequence is TKLAVQIGKAGLVMSAITVI. The Extracellular portion of the chain corresponds to 411-443; sequence ILVLYFTVDTFVVNKKPWLTECTPVYVQYFVKF. The chain crosses the membrane as a helical span at residues 444-461; that stretch reads FIIGVTVLVVAVPEGLPL. Residues 462–875 are Cytoplasmic-facing; that stretch reads AVTISLAYSV…MWGRNVYDSI (414 aa). Residue aspartate 499 is the 4-aspartylphosphate intermediate of the active site. Residues aspartate 820 and aspartate 824 each coordinate Mg(2+). A helical transmembrane segment spans residues 876–895; sequence SKFLQFQLTVNVVAVIVAFT. The Extracellular portion of the chain corresponds to 896 to 905; that stretch reads GACITQDSPL. Residues 906-926 form a helical membrane-spanning segment; that stretch reads KAVQMLWVNLIMDTFASLALA. The Cytoplasmic segment spans residues 927–946; that stretch reads TEPPTETLLLRKPYGRNKPL. The chain crosses the membrane as a helical span at residues 947–969; the sequence is ISRTMMKNILGHAVYQLTLIFTL. Residues 970–987 are Extracellular-facing; it reads LFVGEKMFQIDSGRNAPL. A helical transmembrane segment spans residues 988–1009; it reads HSPPSEHYTIIFNTFVMMQLFN. Over 1010–1028 the chain is Cytoplasmic; it reads EINARKIHGERNVFDGIFR. A helical transmembrane segment spans residues 1029-1050; that stretch reads NPIFCTIVLGTFAIQIVIVQFG. Over 1051–1060 the chain is Extracellular; the sequence is GKPFSCSPLQ. Residues 1061 to 1082 form a helical membrane-spanning segment; the sequence is LDQWMWCIFIGLGELVWGQVIA. At 1083 to 1243 the chain is on the cytoplasmic side; it reads TIPTSRLKFL…SPIHSLETSL (161 aa). Glutamate 1107, isoleucine 1116, aspartate 1117, arginine 1121, tryptophan 1130, phenylalanine 1131, and glutamine 1138 each carry phosphoserine. The tract at residues 1123–1140 is calmodulin-binding subdomain A; sequence LRRGQILWFRGLNRIQTQ. Position 1139 is a phosphothreonine; by PKC (threonine 1139). The tract at residues 1141-1150 is calmodulin-binding subdomain B; sequence IRVVKAFRSS. Residues valine 1144, phenylalanine 1147, arginine 1148, tyrosine 1152, arginine 1161, threonine 1162, isoleucine 1175, and serine 1178 each carry the phosphoserine modification. Threonine 1188 carries the phosphothreonine modification. The tract at residues 1194-1243 is disordered; the sequence is AALKQNSSPPSSLNKNNSAIDSGINLTTDTSKSATSSSPGSPIHSLETSL. Low complexity-rich tracts occupy residues 1196–1211 and 1220–1234; these read LKQN…KNNS and TTDT…SPGS. The residue at position 1201 (serine 1201) is a Phosphoserine; by PKA. Serine 1211 is modified (phosphoserine).

It belongs to the cation transport ATPase (P-type) (TC 3.A.3) family. Type IIB subfamily. In terms of assembly, interacts with PDZD11. Isoforms containing segment B are found in brain, uterus, liver and kidney and in low levels in other tissues. Isoforms containing segment W are found in kidney, uterus, and pancreas. Isoforms containing segment Y are found in pancreas and in low levels in brain and heart. Isoforms containing segment Z are found in brain and heart and isoforms containing segment X are found in low levels in brain. Isoforms containing segment A are found in low levels in heart and small intestine while isoforms containing segment C are found in testis and in low levels in other tissues.

Its subcellular location is the cell membrane. The protein localises to the synapse. The protein resides in the apical cell membrane. It localises to the basolateral cell membrane. It catalyses the reaction Ca(2+)(in) + ATP + H2O = Ca(2+)(out) + ADP + phosphate + H(+). Its function is as follows. ATP-driven Ca(2+) ion pump involved in the maintenance of basal intracellular Ca(2+) levels in specialized cells of cerebellar circuit and vestibular and cochlear systems. Uses ATP as an energy source to transport cytosolic Ca(2+) ions across the plasma membrane to the extracellular compartment. Has fast activation and Ca(2+) clearance rate suited to control fast neuronal Ca(2+) dynamics. At parallel fiber to Purkinje neuron synapse, mediates presynaptic Ca(2+) efflux in response to climbing fiber-induced Ca(2+) rise. Provides for fast return of Ca(2+) concentrations back to their resting levels, ultimately contributing to long-term depression induction and motor learning. Plays an essential role in hearing and balance. In cochlear hair cells, shuttles Ca(2+) ions from stereocilia to the endolymph and dissipates Ca(2+) transients generated by the opening of the mechanoelectrical transduction channels. Regulates Ca(2+) levels in the vestibular system, where it contributes to the formation of otoconia. In non-excitable cells, regulates Ca(2+) signaling through spatial control of Ca(2+) ions extrusion and dissipation of Ca(2+) transients generated by store-operated channels. In lactating mammary gland, allows for the high content of Ca(2+) ions in the milk. In Rattus norvegicus (Rat), this protein is Plasma membrane calcium-transporting ATPase 2 (Atp2b2).